A 584-amino-acid chain; its full sequence is A-type ATP synthase subunit A (584 aa).

Position 233-240 (233-240 (GPFGSGKT)) interacts with ATP.

It belongs to the ATPase alpha/beta chains family. Has multiple subunits with at least A(3), B(3), C, D, E, F, H, I and proteolipid K(x).

Its subcellular location is the cell membrane. It carries out the reaction ATP + H2O + 4 H(+)(in) = ADP + phosphate + 5 H(+)(out). In terms of biological role, component of the A-type ATP synthase that produces ATP from ADP in the presence of a proton gradient across the membrane. The A chain is the catalytic subunit. In Methanobrevibacter smithii (strain ATCC 35061 / DSM 861 / OCM 144 / PS), this protein is A-type ATP synthase subunit A.